We begin with the raw amino-acid sequence, 424 residues long: Gamma-glutamyl phosphate reductase (424 aa).

It belongs to the gamma-glutamyl phosphate reductase family.

It is found in the cytoplasm. It carries out the reaction L-glutamate 5-semialdehyde + phosphate + NADP(+) = L-glutamyl 5-phosphate + NADPH + H(+). It participates in amino-acid biosynthesis; L-proline biosynthesis; L-glutamate 5-semialdehyde from L-glutamate: step 2/2. Catalyzes the NADPH-dependent reduction of L-glutamate 5-phosphate into L-glutamate 5-semialdehyde and phosphate. The product spontaneously undergoes cyclization to form 1-pyrroline-5-carboxylate. In Dehalococcoides mccartyi (strain ATCC BAA-2266 / KCTC 15142 / 195) (Dehalococcoides ethenogenes (strain 195)), this protein is Gamma-glutamyl phosphate reductase.